Consider the following 310-residue polypeptide: B3 domain-containing protein At4g02870 (310 aa).

Positions 1-21 (MTLSDDPISPSTQESSNSSYV) are enriched in polar residues. The tract at residues 1-39 (MTLSDDPISPSTQESSNSSYVRSKEAEKNSPSQETDEEV) is disordered. The TF-B3 DNA-binding region spans 205–300 (RCGRLILQSS…RLQFGVISRN (96 aa)).

It is found in the nucleus. This Arabidopsis thaliana (Mouse-ear cress) protein is B3 domain-containing protein At4g02870 (ARF42).